Consider the following 1115-residue polypeptide: MPRRTDLHHVLVIGSGPIVIGQACEFDYSGTQACRVLRAEGLQVSLVNSNPATIMTDPEFADHTYVEPITPAFVERVIAQQAERGNKIDALLATLGGQTALNTAVALYESGVLEKYGVELIGADFDAIQRGEDRQRFKDIVAKAGGESARSRVCFTMAEVRETVAELGLPVVVRPSFTMGGLGSGIAYSTDEVDRMAGAGLAASPSANVLIEESIYGWKEFELELMRDGHDNVVVVCSIENVDPMGVHTGDSVTVAPAMTLTDREYQRMRDLGIAILREVGVDTGGCNIQFAVNPRDGRLIVIEMNPRVSRSSALASKATGFPIAKIAAKLAIGYTLDEIVNDITGETPACFEPTLDYVVVKAPRFAFEKFPGADPTLTTTMKSVGEAMSLGRNFVEALGKVMRSLETTRAGFWTAPDPDGGIEEALTRLRTPAEGRLYDIELALRLGATVERVAEASGVDPWFIAQINELVNLRNELVAAPVLNAELLRRAKHSGLSDHQIASLRPELAGEAGVRSLRVRLGIHPVYKTVDTCAAEFEAQTPYHYSSYELDPAAETEVAPQTERPKVLILGSGPNRIGQGIEFDYSCVHAATTLSQAGFETVMVNCNPETVSTDYDTADRLYFEPLTFEDVLEVYHAEMESGSGGPGVAGVIVQLGGQTPLGLAHRLADAGVPIVGTPPEAIDLAEDRGAFGDLLSAAGLPAPKYGTATTFAQARRIAEEIGYPVLVRPSYVLGGRGMEIVYDEETLQGYITRATQLSPEHPVLVDRFLEDAVEIDVDALCDGAEVYIGGIMEHIEEAGIHSGDSACALPPVTLGRSDIEKVRKATEAIAHGIGVVGLLNVQYALKDDVLYVLEANPRASRTVPFVSKATAVPLAKACARIMLGATIAQLRAEGLLAVTGDGAHAARNAPIAVKEAVLPFHRFRRADGAAIDSLLGPEMKSTGEVMGIDRDFGSAFAKSQTAAYGSLPAQGTVFVSVANRDKRSLVFPVKRLADLGFRVLATEGTAEMLRRNGIPCDDVRKHFEPAQPGRPTMSAVDAIRAGEVNMVINTPYGNSGPRIDGYEIRSAAVAGNIPCITTVQGASAAVQGIEAGIRGDIGVRSLQELHRVIGGVER.

Positions 1 to 407 are carboxyphosphate synthetic domain; it reads MPRRTDLHHV…ALGKVMRSLE (407 aa). Residues arginine 134, arginine 174, glycine 180, glycine 181, glutamate 213, isoleucine 215, glutamate 220, glycine 246, valine 247, histidine 248, glutamine 290, and glutamate 304 each contribute to the ATP site. In terms of domain architecture, ATP-grasp 1 spans 138–333; it reads KDIVAKAGGE…IAKIAAKLAI (196 aa). Positions 290, 304, and 306 each coordinate Mg(2+). 3 residues coordinate Mn(2+): glutamine 290, glutamate 304, and asparagine 306. The oligomerization domain stretch occupies residues 408–559; the sequence is TTRAGFWTAP…ELDPAAETEV (152 aa). The segment at 560-965 is carbamoyl phosphate synthetic domain; it reads APQTERPKVL…AFAKSQTAAY (406 aa). Residues 693–884 form the ATP-grasp 2 domain; the sequence is GDLLSAAGLP…LAKACARIML (192 aa). Residues arginine 729, arginine 768, leucine 770, glutamate 775, glycine 800, isoleucine 801, histidine 802, serine 803, glutamine 843, and glutamate 855 each contribute to the ATP site. 3 residues coordinate Mg(2+): glutamine 843, glutamate 855, and asparagine 857. The Mn(2+) site is built by glutamine 843, glutamate 855, and asparagine 857. An MGS-like domain is found at 966-1113; the sequence is GSLPAQGTVF…QELHRVIGGV (148 aa). An allosteric domain region spans residues 966–1115; that stretch reads GSLPAQGTVF…LHRVIGGVER (150 aa).

It belongs to the CarB family. In terms of assembly, composed of two chains; the small (or glutamine) chain promotes the hydrolysis of glutamine to ammonia, which is used by the large (or ammonia) chain to synthesize carbamoyl phosphate. Tetramer of heterodimers (alpha,beta)4. It depends on Mg(2+) as a cofactor. Requires Mn(2+) as cofactor.

The catalysed reaction is hydrogencarbonate + L-glutamine + 2 ATP + H2O = carbamoyl phosphate + L-glutamate + 2 ADP + phosphate + 2 H(+). It carries out the reaction hydrogencarbonate + NH4(+) + 2 ATP = carbamoyl phosphate + 2 ADP + phosphate + 2 H(+). It functions in the pathway amino-acid biosynthesis; L-arginine biosynthesis; carbamoyl phosphate from bicarbonate: step 1/1. The protein operates within pyrimidine metabolism; UMP biosynthesis via de novo pathway; (S)-dihydroorotate from bicarbonate: step 1/3. Its function is as follows. Large subunit of the glutamine-dependent carbamoyl phosphate synthetase (CPSase). CPSase catalyzes the formation of carbamoyl phosphate from the ammonia moiety of glutamine, carbonate, and phosphate donated by ATP, constituting the first step of 2 biosynthetic pathways, one leading to arginine and/or urea and the other to pyrimidine nucleotides. The large subunit (synthetase) binds the substrates ammonia (free or transferred from glutamine from the small subunit), hydrogencarbonate and ATP and carries out an ATP-coupled ligase reaction, activating hydrogencarbonate by forming carboxy phosphate which reacts with ammonia to form carbamoyl phosphate. This chain is Carbamoyl phosphate synthase large chain, found in Mycobacterium bovis (strain ATCC BAA-935 / AF2122/97).